The chain runs to 571 residues: Methionine--tRNA ligase (571 aa).

Positions 10–20 match the 'HIGH' region motif; the sequence is PYVNAVPHLGN. Zn(2+) is bound by residues cysteine 143, cysteine 146, cysteine 156, and cysteine 159. The short motif at 333 to 337 is the 'KMSKS' region element; it reads KFSKS. Lysine 336 contacts ATP.

This sequence belongs to the class-I aminoacyl-tRNA synthetase family. MetG type 1 subfamily. Zn(2+) serves as cofactor.

Its subcellular location is the cytoplasm. It carries out the reaction tRNA(Met) + L-methionine + ATP = L-methionyl-tRNA(Met) + AMP + diphosphate. Is required not only for elongation of protein synthesis but also for the initiation of all mRNA translation through initiator tRNA(fMet) aminoacylation. This chain is Methionine--tRNA ligase, found in Sulfurisphaera tokodaii (strain DSM 16993 / JCM 10545 / NBRC 100140 / 7) (Sulfolobus tokodaii).